Reading from the N-terminus, the 252-residue chain is Trans-aconitate 2-methyltransferase (252 aa).

It belongs to the methyltransferase superfamily. Tam family.

Its subcellular location is the cytoplasm. It catalyses the reaction trans-aconitate + S-adenosyl-L-methionine = (E)-3-(methoxycarbonyl)pent-2-enedioate + S-adenosyl-L-homocysteine. Its function is as follows. Catalyzes the S-adenosylmethionine monomethyl esterification of trans-aconitate. The chain is Trans-aconitate 2-methyltransferase from Shigella flexneri serotype 5b (strain 8401).